We begin with the raw amino-acid sequence, 142 residues long: Hemoglobin subunit alpha (142 aa).

In terms of domain architecture, Globin spans 2–142 (VLSPTDKSNV…VSTVLTSKYR (141 aa)). Ser-4 bears the Phosphoserine mark. Lys-8 and Lys-12 each carry N6-succinyllysine. The residue at position 17 (Lys-17) is an N6-acetyllysine; alternate. Lys-17 bears the N6-succinyllysine; alternate mark. Tyr-25 is modified (phosphotyrosine). Residue Lys-41 is modified to N6-succinyllysine. Position 59 (His-59) interacts with O2. His-88 serves as a coordination point for heme b. Phosphoserine is present on Ser-103. Residue Thr-109 is modified to Phosphothreonine. Residues Ser-125 and Ser-132 each carry the phosphoserine modification. 2 positions are modified to phosphothreonine: Thr-135 and Thr-138. At Ser-139 the chain carries Phosphoserine.

It belongs to the globin family. As to quaternary structure, heterotetramer of two alpha chains and two beta chains. Red blood cells.

Its function is as follows. Involved in oxygen transport from the lung to the various peripheral tissues. Hemopressin acts as an antagonist peptide of the cannabinoid receptor CNR1. Hemopressin-binding efficiently blocks cannabinoid receptor CNR1 and subsequent signaling. This Balaenoptera acutorostrata (Common minke whale) protein is Hemoglobin subunit alpha (HBA).